The chain runs to 466 residues: Clusterin-like protein 1 (466 aa).

The signal sequence occupies residues 1–20; that stretch reads MKPPLLVFIVCLLWLKDSHC. The stretch at 57–111 forms a coiled coil; that stretch reads KQMKIMMERKEKEHTNLMSTLKKCREEKQEALKLLNEVQEHLEEEERLCRESLAD. 5 disulfide bridges follow: cysteine 105/cysteine 333, cysteine 116/cysteine 325, cysteine 119/cysteine 322, cysteine 124/cysteine 315, and cysteine 131/cysteine 305. N-linked (GlcNAc...) asparagine glycans are attached at residues asparagine 196, asparagine 257, asparagine 311, asparagine 351, asparagine 412, and asparagine 431.

This sequence belongs to the clusterin family.

Its subcellular location is the secreted. In Homo sapiens (Human), this protein is Clusterin-like protein 1 (CLUL1).